We begin with the raw amino-acid sequence, 339 residues long: Ketol-acid reductoisomerase (NADP(+)) (339 aa).

The KARI N-terminal Rossmann domain occupies Met1–Thr182. Residues Tyr24–Gln27, Arg48, Ser51, Thr53, and Asp83–Gln86 each bind NADP(+). His108 is an active-site residue. Residue Gly134 coordinates NADP(+). The KARI C-terminal knotted domain occupies Thr183 to Ile328. Mg(2+)-binding residues include Asp191, Glu195, Glu227, and Glu231. Residue Ser252 participates in substrate binding.

It belongs to the ketol-acid reductoisomerase family. Mg(2+) is required as a cofactor.

It catalyses the reaction (2R)-2,3-dihydroxy-3-methylbutanoate + NADP(+) = (2S)-2-acetolactate + NADPH + H(+). The enzyme catalyses (2R,3R)-2,3-dihydroxy-3-methylpentanoate + NADP(+) = (S)-2-ethyl-2-hydroxy-3-oxobutanoate + NADPH + H(+). Its pathway is amino-acid biosynthesis; L-isoleucine biosynthesis; L-isoleucine from 2-oxobutanoate: step 2/4. It functions in the pathway amino-acid biosynthesis; L-valine biosynthesis; L-valine from pyruvate: step 2/4. Its function is as follows. Involved in the biosynthesis of branched-chain amino acids (BCAA). Catalyzes an alkyl-migration followed by a ketol-acid reduction of (S)-2-acetolactate (S2AL) to yield (R)-2,3-dihydroxy-isovalerate. In the isomerase reaction, S2AL is rearranged via a Mg-dependent methyl migration to produce 3-hydroxy-3-methyl-2-ketobutyrate (HMKB). In the reductase reaction, this 2-ketoacid undergoes a metal-dependent reduction by NADPH to yield (R)-2,3-dihydroxy-isovalerate. In Rhizorhabdus wittichii (strain DSM 6014 / CCUG 31198 / JCM 15750 / NBRC 105917 / EY 4224 / RW1) (Sphingomonas wittichii), this protein is Ketol-acid reductoisomerase (NADP(+)).